Here is a 351-residue protein sequence, read N- to C-terminus: 1-acylglycerol-3-phosphate O-acyltransferase ABHD5 (351 aa).

Positions 79-184 (PLVLLHGFGG…LILVEPWGFP (106 aa)) constitute an AB hydrolase-1 domain. Residue serine 124 is modified to Phosphoserine. Residues 329-334 (HYVYAD) carry the HXXXXD motif motif.

It belongs to the peptidase S33 family. ABHD4/ABHD5 subfamily. In terms of assembly, interacts with ADRP. Interacts with PLIN. Interacts with and PNPLA2. Interacts with PLIN5; promotes interaction with PNPLA2. In terms of tissue distribution, highly expressed in the adipose tissue and testes. Weakly expressed in the liver, muscle, kidney, and heart. Expressed by upper epidermal layers and dermal fibroblasts in skin, hepatocytes and hypothalamus in brain (at protein level).

The protein resides in the cytoplasm. It localises to the lipid droplet. The protein localises to the cytosol. The catalysed reaction is a 1-acyl-sn-glycero-3-phosphate + an acyl-CoA = a 1,2-diacyl-sn-glycero-3-phosphate + CoA. The enzyme catalyses 1-(9Z-octadecenoyl)-sn-glycero-3-phosphate + (9Z)-octadecenoyl-CoA = 1,2-di-(9Z-octadecenoyl)-sn-glycero-3-phosphate + CoA. It catalyses the reaction 1-(9Z-octadecenoyl)-sn-glycero-3-phosphate + hexadecanoyl-CoA = 1-(9Z)-octadecenoyl-2-hexadecanoyl-sn-glycero-3-phosphate + CoA. It carries out the reaction 1-(9Z-octadecenoyl)-sn-glycero-3-phosphate + octadecanoyl-CoA = 1-(9Z-octadecenoyl)-2-octadecanoyl-sn-glycero-3-phosphate + CoA. The catalysed reaction is 1-(9Z-octadecenoyl)-sn-glycero-3-phosphate + (5Z,8Z,11Z,14Z)-eicosatetraenoyl-CoA = 1-(9Z)-octadecenoyl-2-(5Z,8Z,11Z,14Z)-eicosatetraenoyl-sn-glycero-3-phosphate + CoA. The enzyme catalyses eicosanoyl-CoA + 1-(9Z-octadecenoyl)-sn-glycero-3-phosphate = 1-(9Z)-octadecenoyl-2-eicosanoyl-sn-glycero-3-phosphate + CoA. It catalyses the reaction 1-hexadecanoyl-sn-glycero-3-phosphate + (9Z)-octadecenoyl-CoA = 1-hexadecanoyl-2-(9Z-octadecenoyl)-sn-glycero-3-phosphate + CoA. It carries out the reaction 1-octadecanoyl-sn-glycero-3-phosphate + (9Z)-octadecenoyl-CoA = 1-octadecanoyl-2-(9Z-octadecenoyl)-sn-glycero-3-phosphate + CoA. The catalysed reaction is 1-(5Z,8Z,11Z,14Z-eicosatetraenoyl)-sn-glycero-3-phosphate + (9Z)-octadecenoyl-CoA = 1-(5Z,8Z,11Z,14Z)-eicosatetraenoyl-2-(9Z)-octadecenoyl-sn-glycero-3-phosphate + CoA. Acyltransferase activity is inhibited by detergents such as Triton X-100 and 3-[(3-cholamidopropyl)dimethylammonio]-1-propanesulfonate (CHAPS). Acyltransferase activity is inhibited by the presence of magnesium and calcium. Functionally, coenzyme A-dependent lysophosphatidic acid acyltransferase that catalyzes the transfer of an acyl group on a lysophosphatidic acid. Functions preferentially with 1-oleoyl-lysophosphatidic acid followed by 1-palmitoyl-lysophosphatidic acid, 1-stearoyl-lysophosphatidic acid and 1-arachidonoyl-lysophosphatidic acid as lipid acceptor. Functions preferentially with arachidonoyl-CoA followed by oleoyl-CoA as acyl group donors. Functions in phosphatidic acid biosynthesis. May regulate the cellular storage of triacylglycerol through activation of the phospholipase PNPLA2. Involved in keratinocyte differentiation. Regulates lipid droplet fusion. This Mus musculus (Mouse) protein is 1-acylglycerol-3-phosphate O-acyltransferase ABHD5.